The following is a 468-amino-acid chain: UDP-N-acetylmuramoyl-L-alanine--L-glutamate ligase (468 aa).

122-128 (GTKGKST) lines the ATP pocket.

The protein belongs to the MurCDEF family. MurD2 subfamily.

Its subcellular location is the cytoplasm. It catalyses the reaction UDP-N-acetyl-alpha-D-muramoyl-L-alanine + L-glutamate + ATP = UDP-N-acetyl-alpha-D-muramoyl-L-alanyl-L-glutamate + ADP + phosphate + H(+). Its pathway is cell wall biogenesis; peptidoglycan biosynthesis. In terms of biological role, cell wall formation. Catalyzes the addition of L-glutamate to the nucleotide precursor UDP-N-acetylmuramoyl-L-alanine. Has weak activity with D-glutamate. The chain is UDP-N-acetylmuramoyl-L-alanine--L-glutamate ligase from Xanthomonas oryzae pv. oryzae (strain MAFF 311018).